Here is a 316-residue protein sequence, read N- to C-terminus: Acetyl-coenzyme A carboxylase carboxyl transferase subunit beta (316 aa).

The region spanning 39-308 is the CoA carboxyltransferase N-terminal domain; that stretch reads LWHKCSKCGV…PPHMVLWETM (270 aa). Cysteine 43, cysteine 46, cysteine 62, and cysteine 65 together coordinate Zn(2+). The C4-type zinc finger occupies 43–65; the sequence is CSKCGVLAYTKDLKANQMVCIEC.

The protein belongs to the AccD/PCCB family. In terms of assembly, acetyl-CoA carboxylase is a heterohexamer composed of biotin carboxyl carrier protein (AccB), biotin carboxylase (AccC) and two subunits each of ACCase subunit alpha (AccA) and ACCase subunit beta (AccD). It depends on Zn(2+) as a cofactor.

The protein localises to the cytoplasm. The catalysed reaction is N(6)-carboxybiotinyl-L-lysyl-[protein] + acetyl-CoA = N(6)-biotinyl-L-lysyl-[protein] + malonyl-CoA. It functions in the pathway lipid metabolism; malonyl-CoA biosynthesis; malonyl-CoA from acetyl-CoA: step 1/1. In terms of biological role, component of the acetyl coenzyme A carboxylase (ACC) complex. Biotin carboxylase (BC) catalyzes the carboxylation of biotin on its carrier protein (BCCP) and then the CO(2) group is transferred by the transcarboxylase to acetyl-CoA to form malonyl-CoA. The sequence is that of Acetyl-coenzyme A carboxylase carboxyl transferase subunit beta from Nostoc punctiforme (strain ATCC 29133 / PCC 73102).